A 188-amino-acid chain; its full sequence is MSRGAAGWCCLVLWLPTCVAAHGLRIHDYLYFQVLSPGDIRYIFTATPAKDFGGIFHTRYEQIHLVPAEPPEACGELSNGFFIQDQIALVERGGCSFLSKTRVVQEHGGRAVIISDNAVDNDSFYVEMIQDSTQRTADIPALFLLGRDGYMIRRSLEQHGLPWAIISIPVNVTSIPTFELLQPPWTFW.

A signal peptide spans 1-21; the sequence is MSRGAAGWCCLVLWLPTCVAA. Positions 83 to 163 constitute a PA domain; it reads IQDQIALVER…RSLEQHGLPW (81 aa). 2 N-linked (GlcNAc...) asparagine glycosylation sites follow: asparagine 121 and asparagine 171.

Post-translationally, N-glycosylated; required for efficient secretion. In terms of tissue distribution, expressed in metabolically active tissues such as liver, muscle, adipose, and heart and different brain regions like cortex and hypothalamus, expression is acutely regulated by the nutritional state.

The protein localises to the secreted. Its function is as follows. Plays a role in the modulation of physical activity and adiposity. The polypeptide is Protease-associated domain-containing protein 1 (Mus musculus (Mouse)).